A 37-amino-acid polypeptide reads, in one-letter code: MKVRASVRKMCEKCRTIRRKGRVMVICSNSKHKQRQG.

The protein belongs to the bacterial ribosomal protein bL36 family.

The protein localises to the plastid. It localises to the cyanelle. The sequence is that of Large ribosomal subunit protein bL36c (rpl36) from Cyanophora paradoxa.